The following is a 256-amino-acid chain: Mediator of RNA polymerase II transcription subunit 7 (256 aa).

Disordered regions lie at residues 1–20 (MEEGGQQKGITAAFPPPPPF) and 208–244 (EAEGRNVSPNDEPVQTPESGPHNTKTQTSESQANGEQ). Polar residues predominate over residues 223–242 (TPESGPHNTKTQTSESQANG).

The protein belongs to the Mediator complex subunit 7 family. Component of the Mediator complex.

It is found in the nucleus. Its function is as follows. Component of the Mediator complex, a coactivator involved in the regulated transcription of nearly all RNA polymerase II-dependent genes. Mediator functions as a bridge to convey information from gene-specific regulatory proteins to the basal RNA polymerase II transcription machinery. Mediator is recruited to promoters by direct interactions with regulatory proteins and serves as a scaffold for the assembly of a functional preinitiation complex with RNA polymerase II and the general transcription factors. This is Mediator of RNA polymerase II transcription subunit 7 (MED7) from Coccidioides immitis (strain RS) (Valley fever fungus).